Here is a 201-residue protein sequence, read N- to C-terminus: MSFTGTQDKCTACDKTVHFIDLLTADGVPYHKTCFKCSHCKGILSMCSYSSMDGVLYCKTHFEQLFKETGSFSKKFAPGCRSTDKELARAPSKICSAFSGTQDKCAACQKTVYPLEKLTLEGESYHKSCFKCSHGGCILTTSSYAALNGVLYCKIHFGQLFMEKGSYNHMKKKSESQEVLPEVVPEEQPAPPPPDENREDN.

2 consecutive LIM zinc-binding domains span residues 8 to 68 (DKCT…LFKE) and 103 to 163 (DKCA…LFME). The segment at 171–201 (KKKSESQEVLPEVVPEEQPAPPPPDENREDN) is disordered. Residues 177 to 187 (QEVLPEVVPEE) show a composition bias toward low complexity.

Interacts with NEK3.

This Oryza sativa subsp. japonica (Rice) protein is LIM domain-containing protein PLIM2b.